A 79-amino-acid polypeptide reads, in one-letter code: Large ribosomal subunit protein uL24 (79 aa).

Belongs to the universal ribosomal protein uL24 family. In terms of assembly, part of the 50S ribosomal subunit.

Functionally, one of two assembly initiator proteins, it binds directly to the 5'-end of the 23S rRNA, where it nucleates assembly of the 50S subunit. One of the proteins that surrounds the polypeptide exit tunnel on the outside of the subunit. The protein is Large ribosomal subunit protein uL24 of Lactobacillus delbrueckii subsp. bulgaricus (strain ATCC BAA-365 / Lb-18).